The following is a 1331-amino-acid chain: DNA-directed RNA polymerase subunit beta' (1331 aa).

Residues cysteine 220, cysteine 293, cysteine 300, and cysteine 303 each coordinate Zn(2+). Disordered stretches follow at residues 1236–1257 and 1294–1331; these read DFVD…TNDN and ISGD…MKDQ. The span at 1243-1257 shows a compositional bias: polar residues; sequence SRSPNGYSNVVTNDN.

This sequence belongs to the RNA polymerase beta' chain family. RpoC2 subfamily. As to quaternary structure, in cyanobacteria the RNAP catalytic core is composed of 2 alpha, 1 beta, 1 beta', 1 gamma and 1 omega subunit. When a sigma factor is associated with the core the holoenzyme is formed, which can initiate transcription. It depends on Zn(2+) as a cofactor.

The catalysed reaction is RNA(n) + a ribonucleoside 5'-triphosphate = RNA(n+1) + diphosphate. Its function is as follows. DNA-dependent RNA polymerase catalyzes the transcription of DNA into RNA using the four ribonucleoside triphosphates as substrates. The chain is DNA-directed RNA polymerase subunit beta' from Picosynechococcus sp. (strain ATCC 27264 / PCC 7002 / PR-6) (Agmenellum quadruplicatum).